Here is a 119-residue protein sequence, read N- to C-terminus: Large ribosomal subunit protein uL22 (119 aa).

Belongs to the universal ribosomal protein uL22 family. Part of the 50S ribosomal subunit.

Its function is as follows. This protein binds specifically to 23S rRNA; its binding is stimulated by other ribosomal proteins, e.g. L4, L17, and L20. It is important during the early stages of 50S assembly. It makes multiple contacts with different domains of the 23S rRNA in the assembled 50S subunit and ribosome. In terms of biological role, the globular domain of the protein is located near the polypeptide exit tunnel on the outside of the subunit, while an extended beta-hairpin is found that lines the wall of the exit tunnel in the center of the 70S ribosome. The chain is Large ribosomal subunit protein uL22 from Chlorobium luteolum (strain DSM 273 / BCRC 81028 / 2530) (Pelodictyon luteolum).